A 114-amino-acid polypeptide reads, in one-letter code: Large ribosomal subunit protein bL20c (114 aa).

This sequence belongs to the bacterial ribosomal protein bL20 family.

The protein localises to the plastid. Its subcellular location is the cyanelle. Its function is as follows. Binds directly to 23S ribosomal RNA and is necessary for the in vitro assembly process of the 50S ribosomal subunit. It is not involved in the protein synthesizing functions of that subunit. The sequence is that of Large ribosomal subunit protein bL20c (rpl20) from Cyanophora paradoxa.